The sequence spans 1962 residues: PIII-type proteinase (1962 aa).

The signal sequence occupies residues 1-33 (MQRKKKGLSILLAGTVALGALAVLPVGEIQAKA). The propeptide occupies 34-187 (AISQQTKGSS…VTLAKVYYPT (154 aa)). Residues 191–697 (ANSMANVQAV…AGLVDVKAAI (507 aa)) enclose the Peptidase S8 domain. Active-site charge relay system residues include Asp-217, His-281, and Ser-620. The interval 1796 to 1938 (GKGDGTTGTS…KTGETTERPA (143 aa)) is disordered. Residues 1797–1812 (KGDGTTGTSDKGGGQG) are compositionally biased toward gly residues. Polar residues-rich tracts occupy residues 1856–1865 (RNGQLTSGTS) and 1890–1903 (SQPS…TNPA). The short motif at 1927–1931 (LPKTG) is the LPXTG sorting signal element. Residue Thr-1930 is modified to Pentaglycyl murein peptidoglycan amidated threonine. Positions 1931–1962 (GETTERPAFGFLGVIVVSLMGVLGLKRKQREE) are cleaved as a propeptide — removed by sortase.

This sequence belongs to the peptidase S8 family.

It is found in the secreted. The protein resides in the cell wall. It catalyses the reaction Endopeptidase activity with very broad specificity, although some subsite preference have been noted, e.g. large hydrophobic residues in the P1 and P4 positions, and Pro in the P2 position. Best known for its action on caseins, although it has been shown to hydrolyze hemoglobin and oxidized insulin B-chain.. Functionally, protease which breaks down milk proteins during the growth of the bacteria on milk. The polypeptide is PIII-type proteinase (prtP) (Lactococcus lactis subsp. cremoris (strain SK11)).